Here is a 126-residue protein sequence, read N- to C-terminus: Small ribosomal subunit protein bS6 (126 aa).

The interval Leu103–Glu126 is disordered. The span at Leu115 to Glu126 shows a compositional bias: acidic residues.

It belongs to the bacterial ribosomal protein bS6 family.

Its function is as follows. Binds together with bS18 to 16S ribosomal RNA. The chain is Small ribosomal subunit protein bS6 from Glaesserella parasuis serovar 5 (strain SH0165) (Haemophilus parasuis).